The sequence spans 240 residues: Serine protease SplB (240 aa).

An N-terminal signal peptide occupies residues 1–36; that stretch reads MNKNVVIKSLATLTILTSVAGIGTTLVEEVQQTAKA. Residues histidine 75, aspartate 113, and serine 193 each act as charge relay system in the active site.

Belongs to the peptidase S1B family.

The protein localises to the secreted. Serine protease that cleaves specifically after the sequence Trp-Glu-Leu-Gln. This is Serine protease SplB (splB) from Staphylococcus aureus (strain bovine RF122 / ET3-1).